We begin with the raw amino-acid sequence, 235 residues long: C-&gt;U-editing enzyme APOBEC-1 (235 aa).

Residues 10-131 (GDATLRRRIK…MDQQHRQGLK (122 aa)) form the CMP/dCMP-type deaminase domain. Position 60 (His-60) interacts with Zn(2+). The active-site Proton donor is the Glu-62. Residues Cys-92 and Cys-95 each contribute to the Zn(2+) site.

This sequence belongs to the cytidine and deoxycytidylate deaminase family. As to quaternary structure, homodimer. Interacts with A1CF; form an mRNA editing complex. Interacts with RBM47; form an mRNA editing complex. Found in a complex with CELF2/CUGBP2 and A1CF. Interacts with HNRPAB. Interacts with SYNCRIP. The cofactor is Zn(2+).

The protein resides in the cytoplasm. It is found in the nucleus. The catalysed reaction is a cytidine in mRNA + H2O + H(+) = a uridine in mRNA + NH4(+). The enzyme catalyses cytidine(6666) in apoB mRNA + H2O + H(+) = uridine(6666) in apoB mRNA + NH4(+). In terms of biological role, cytidine deaminase catalyzing the cytidine to uridine postranscriptional editing of a variety of mRNAs. Form complexes with cofactors that confer differential editing activity and selectivity. Responsible for the postranscriptional editing of a CAA codon for Gln to a UAA codon for stop in the apolipoprotein B mRNA. Also involved in CGA (Arg) to UGA (Stop) editing in the NF1 mRNA. May also play a role in the epigenetic regulation of gene expression by participating in DNA demethylation. In Monodelphis domestica (Gray short-tailed opossum), this protein is C-&gt;U-editing enzyme APOBEC-1.